Reading from the N-terminus, the 1145-residue chain is DNA-directed RNA polymerase subunit beta (1145 aa).

The segment covering 1101 to 1112 (LPEERRVSSSKE) has biased composition (basic and acidic residues). Positions 1101 to 1145 (LPEERRVSSSKEEIEEEEEVEDNSDEFDETFLEEAEDDFSLDDED) are disordered. A compositionally biased stretch (acidic residues) spans 1113–1145 (EIEEEEEVEDNSDEFDETFLEEAEDDFSLDDED).

The protein belongs to the RNA polymerase beta chain family. In terms of assembly, the RNAP catalytic core consists of 2 alpha, 1 beta, 1 beta' and 1 omega subunit. When a sigma factor is associated with the core the holoenzyme is formed, which can initiate transcription.

The catalysed reaction is RNA(n) + a ribonucleoside 5'-triphosphate = RNA(n+1) + diphosphate. DNA-dependent RNA polymerase catalyzes the transcription of DNA into RNA using the four ribonucleoside triphosphates as substrates. The sequence is that of DNA-directed RNA polymerase subunit beta from Desulforamulus reducens (strain ATCC BAA-1160 / DSM 100696 / MI-1) (Desulfotomaculum reducens).